A 507-amino-acid chain; its full sequence is tRNA (guanine(6)-N(2))-methyltransferase THUMP3 (507 aa).

The THUMP domain occupies 165-285 (KIDQRNVKKE…DNEVIVGIAL (121 aa)).

This sequence belongs to the methyltransferase superfamily. As to quaternary structure, part of the heterodimeric THUMPD3-TRM112 methyltransferase complex; this complex forms an active tRNA methyltransferase, where TRMT112 acts as an activator of the catalytic subunit THUMPD3.

The protein resides in the cytoplasm. The catalysed reaction is guanosine(6) in tRNA + S-adenosyl-L-methionine = N(2)-methylguanosine(6) in tRNA + S-adenosyl-L-homocysteine + H(+). It catalyses the reaction guanosine(7) in tRNA + S-adenosyl-L-methionine = N(2)-methylguanosine(7) in tRNA + S-adenosyl-L-homocysteine + H(+). In terms of biological role, catalytic subunit of the THUMPD3-TRM112 methyltransferase complex, that specifically mediates the S-adenosyl-L-methionine-dependent N(2)-methylation of guanosine nucleotide at position 6 (m2G6) in tRNAs. This is one of the major tRNA (guanine-N(2))-methyltransferases. Also catalyzes the S-adenosyl-L-methionine-dependent N(2)-methylation of guanosine nucleotide at position 7 of tRNA(Trp). This is tRNA (guanine(6)-N(2))-methyltransferase THUMP3 from Homo sapiens (Human).